Reading from the N-terminus, the 2038-residue chain is Homeotic protein female sterile (2038 aa).

The region spanning 34 to 140 is the Bromo 1 domain; the sequence is RNTNQLQYLI…KVFLQKIESM (107 aa). The disordered stretch occupies residues 145–284; that stretch reads LELEPVTAKG…TTAMAGGVGG (140 aa). Composition is skewed to low complexity over residues 177 to 209 and 268 to 279; these read GSGT…SGLQ and PGSTNTTTTAMA. Residues 330-350 form a helical membrane-spanning segment; sequence AAVAAAAAAAAAAAAAAGGAA. The segment at 396-432 is disordered; the sequence is KGVKRKADTTTPTANAFESPYTQMDSKSAKIATRRES. A compositionally biased stretch (polar residues) spans 404 to 421; it reads TTTPTANAFESPYTQMDS. Residues 451-471 traverse the membrane as a helical segment; sequence VSGVPGLGGLVAGGVAGVAVA. A Phosphoserine modification is found at serine 452. The Bromo 2 domain maps to 475–584; sequence EKLSDALKSC…DVFEMRYANI (110 aa). 2 disordered regions span residues 590 to 655 and 677 to 735; these read ANAA…ERSA and EASA…SVPG. Positions 593–619 are enriched in basic residues; sequence AHHHGHGHGHGHGHGHGHGHGHGHGHG. Positions 636–649 are enriched in acidic residues; it reads SSEDSSDTENESNS. Over residues 681–694 the composition is skewed to basic residues; that stretch reads KKKAKKKLKEKKKS. Over residues 711-735 the composition is skewed to gly residues; sequence TGGGANAGGAGGPGSGGHGSVSVPG. 3 consecutive transmembrane segments (helical) span residues 750–770, 790–810, and 816–830; these read LNAL…AGGV, MAGG…AAGA, and AGTL…AAAG. Disordered regions lie at residues 832–858, 891–956, 1016–1139, 1217–1260, 1384–1416, 1502–1530, 1580–1616, 1645–1728, 1745–1918, and 1957–2023; these read GGTT…SGAG, AGAA…SYDE, CLRK…GGNL, AVSA…ATVA, QPAG…QQQQ, MQQM…QQQH, IESM…PNAA, WSSL…VAQA, AAAA…SGAI, and MESG…GQID. Residues 874–894 traverse the membrane as a helical segment; sequence GAAGAAAGAGSVGGVGGAGAA. Gly residues predominate over residues 910 to 927; it reads GAGGGVGGANASAGGAGA. The region spanning 942–1024 is the NET domain; that stretch reads DSEEEDTAKP…SCLRKKTHKK (83 aa). Serine 943 bears the Phosphoserine mark. A compositionally biased stretch (basic residues) spans 1017-1027; it reads LRKKTHKKPSG. Positions 1028 to 1046 are enriched in basic and acidic residues; that stretch reads KSKDEQMAEKKQELEKRLQ. Over residues 1079–1100 the composition is skewed to low complexity; it reads SSSSSSSDSSSSSSSDSSSSDS. 2 stretches are compositionally biased toward polar residues: residues 1121 to 1131 and 1222 to 1232; these read SNGSNVNNPSI and TGQQHNKNGPN. The span at 1645 to 1665 shows a compositional bias: low complexity; that stretch reads WSSLASANSPQSHTSSSSSSS. Residue serine 1653 is modified to Phosphoserine. A compositionally biased stretch (basic and acidic residues) spans 1680–1708; the sequence is KAKERDRLKLLEAAEKEKKNQKEAAEKEQ. Composition is skewed to low complexity over residues 1716 to 1728 and 1745 to 1760; these read SSSS…VAQA and AAAA…PSGG. A helical transmembrane segment spans residues 1731–1751; sequence IAAATAAAAVTLGAAAAAALA. Residues 1776 to 1791 show a composition bias toward basic and acidic residues; that stretch reads GDRDRDRDRERERERS. The span at 1800 to 1813 shows a compositional bias: low complexity; it reads NGNNSSNSANSNGP. Composition is skewed to gly residues over residues 1814-1828 and 1835-1856; these read GSAG…GGSG and PNSG…GGGP. The segment covering 1857 to 1884 has biased composition (low complexity); that stretch reads ALLNAGSNSNSGVGSGGAASSNSNSSVG. Positions 1885–1915 are enriched in gly residues; the sequence is GIVGSGGPGSNSQGSSGGGGGGPASGGGMGS. The chain crosses the membrane as a helical span at residues 1939–1959; that stretch reads VAAAVAAQAILAASPLGAMES. A phosphoserine mark is found at serine 1980 and serine 1988. Low complexity predominate over residues 1986–1997; sequence QSSPAQQSPQDR. Basic and acidic residues predominate over residues 1998 to 2017; it reads AAAKRAEQRRAEQERRRREA.

It localises to the membrane. Its function is as follows. Required maternally for proper expression of other homeotic genes involved in pattern formation, such as Ubx. The sequence is that of Homeotic protein female sterile (fs(1)h) from Drosophila melanogaster (Fruit fly).